A 189-amino-acid polypeptide reads, in one-letter code: Resolvase (189 aa).

The Resolvase/invertase-type recombinase catalytic domain maps to 1–139 (MLVGYARVST…EGLRSAKARG (139 aa)). Ser9 acts as the O-(5'-phospho-DNA)-serine intermediate in catalysis. The disordered stretch occupies residues 130 to 151 (EGLRSAKARGRNGGRPSKRNDK). Residues 165 to 184 (IVDIVKQTELSRATVYRILK) constitute a DNA-binding region (H-T-H motif).

This sequence belongs to the site-specific recombinase resolvase family.

Its function is as follows. A likely role for the res protein would be to stabilize pCP13 by reducing the number of plasmid multimers resulting from homologous recombination. The protein is Resolvase (res) of Clostridium perfringens (strain 13 / Type A).